The following is a 136-amino-acid chain: Protein LITTLE ZIPPER 1 (136 aa).

A coiled-coil region spans residues 97-122 (ENQNIIRENEKLKKKALLLHQENKTL).

Interacts with REV. As to expression, expressed in the adaxial epidermis of the cotyledons and in the vascular cylinder of wild-type torpedo stage embryos.

Competitive inhibitor of the HD-ZIPIII transcription factors in shoot apical meristem (SAM) development. Acts by forming non-functional heterodimers. Part of a negative feedback loop. Essential for proper functioning of stem cells in the SAM. This chain is Protein LITTLE ZIPPER 1, found in Arabidopsis thaliana (Mouse-ear cress).